Here is a 323-residue protein sequence, read N- to C-terminus: HPr kinase/phosphorylase (323 aa).

Residues histidine 146 and lysine 167 contribute to the active site. 161 to 168 (GESGLGKS) lines the ATP pocket. Position 168 (serine 168) interacts with Mg(2+). Aspartate 185 (proton acceptor; for phosphorylation activity. Proton donor; for dephosphorylation activity) is an active-site residue. The tract at residues 209-218 (LEVRGLGLLD) is important for the catalytic mechanism of both phosphorylation and dephosphorylation. Residue glutamate 210 participates in Mg(2+) binding. The active site involves arginine 250. An important for the catalytic mechanism of dephosphorylation region spans residues 271–276 (QVAAGR).

The protein belongs to the HPrK/P family. Homohexamer. It depends on Mg(2+) as a cofactor.

It carries out the reaction [HPr protein]-L-serine + ATP = [HPr protein]-O-phospho-L-serine + ADP + H(+). The enzyme catalyses [HPr protein]-O-phospho-L-serine + phosphate + H(+) = [HPr protein]-L-serine + diphosphate. Its function is as follows. Catalyzes the ATP- as well as the pyrophosphate-dependent phosphorylation of a specific serine residue in HPr, a phosphocarrier protein of the phosphoenolpyruvate-dependent sugar phosphotransferase system (PTS). HprK/P also catalyzes the pyrophosphate-producing, inorganic phosphate-dependent dephosphorylation (phosphorolysis) of seryl-phosphorylated HPr (P-Ser-HPr). The polypeptide is HPr kinase/phosphorylase (Cupriavidus metallidurans (strain ATCC 43123 / DSM 2839 / NBRC 102507 / CH34) (Ralstonia metallidurans)).